Reading from the N-terminus, the 78-residue chain is Large ribosomal subunit protein bL28 (78 aa).

The tract at residues 1–25 (MSRVCQVTGKRPAVGNNRSHAKNAT) is disordered.

Belongs to the bacterial ribosomal protein bL28 family.

The protein is Large ribosomal subunit protein bL28 of Vibrio cholerae serotype O1 (strain ATCC 39541 / Classical Ogawa 395 / O395).